The sequence spans 1048 residues: Selenate reductase subunit A (1048 aa).

The tat-type signal signal peptide spans 1 to 39; it reads MENQHQKFISRRNFIKTSALLGGTAFLGTGLPNIKKTYS. Residues 56–129 enclose the 4Fe-4S Mo/W bis-MGD-type domain; that stretch reads ENILYSACLQ…AGIQHAYDPY (74 aa). Cysteine 63, cysteine 66, cysteine 70, and cysteine 115 together coordinate [4Fe-4S] cluster. Cysteine 270 lines the Mo-bis(molybdopterin guanine dinucleotide) pocket.

Belongs to the prokaryotic molybdopterin-containing oxidoreductase family. As to quaternary structure, the complex is composed of three subunits: SrdA, SrdB and SrdC. Requires [4Fe-4S] cluster as cofactor. Mo-bis(molybdopterin guanine dinucleotide) is required as a cofactor. In terms of processing, predicted to be exported by the Tat system. The position of the signal peptide cleavage has not been experimentally proven.

The protein localises to the secreted. The catalysed reaction is selenite + a quinone + H2O = selenate + a quinol. Its function is as follows. Component of the respiratory selenate reductase complex, which catalyzes the reduction of selenate to selenite. SrdA is probably the catalytic subunit that reduces selenate. The protein is Selenate reductase subunit A of Mesobacillus selenatarsenatis (strain DSM 18680 / JCM 14380 / FERM P-15431 / SF-1).